A 65-amino-acid polypeptide reads, in one-letter code: Small ribosomal subunit protein eS17 (65 aa).

This sequence belongs to the eukaryotic ribosomal protein eS17 family.

In Archaeoglobus fulgidus (strain ATCC 49558 / DSM 4304 / JCM 9628 / NBRC 100126 / VC-16), this protein is Small ribosomal subunit protein eS17.